Reading from the N-terminus, the 196-residue chain is Mpv17-like protein (196 aa).

Residues 1–16 (MAGWWPALSRAARRHP) are Cytoplasmic-facing. Residues 16–55 (PWPTNVLLYGSLVSAGDALQQRLQGREANWRQTRRVATLV) form a targeting to peroxisomes region. Residues 17–34 (WPTNVLLYGSLVSAGDAL) form a helical membrane-spanning segment. Residues 35-50 (QQRLQGREANWRQTRR) are Lumenal-facing. A helical membrane pass occupies residues 51–67 (VATLVVTFHANFNYVWL). Topologically, residues 68-90 (RLLERALPGRAPHALLAKLLCDQ) are cytoplasmic. A helical membrane pass occupies residues 91–108 (VVGAPIAVSAFYVGMSIL). Topologically, residues 109 to 150 (QGKDDIFLDLKQKFWNTYLSGLMYWPFVQLTNFSLVPVQWRT) are lumenal. The helical transmembrane segment at 151–167 (AYAGVCGFLWATFICFS) threads the bilayer. Residues 168–196 (QQSGDGTFKSAFTILYTKGTSATEGYPKK) lie on the Cytoplasmic side of the membrane.

The protein belongs to the peroxisomal membrane protein PXMP2/4 family. Isoform 1 is detected in the kidney (at protein level). Isoform 1 and isoform 2 are expressed in the kidney, heart, liver, lung, pancreas and skeletal muscle.

It is found in the peroxisome membrane. Participates in reactive oxygen species metabolism by up- or down-regulation of the genes of antioxidant enzymes. Protective against the mitochondrial apoptotic cascade. This Homo sapiens (Human) protein is Mpv17-like protein (MPV17L).